Reading from the N-terminus, the 161-residue chain is Crossover junction endodeoxyribonuclease RuvC (161 aa).

Active-site residues include Asp-9, Glu-72, and Asp-144. The Mg(2+) site is built by Asp-9, Glu-72, and Asp-144.

Belongs to the RuvC family. Homodimer which binds Holliday junction (HJ) DNA. The HJ becomes 2-fold symmetrical on binding to RuvC with unstacked arms; it has a different conformation from HJ DNA in complex with RuvA. In the full resolvosome a probable DNA-RuvA(4)-RuvB(12)-RuvC(2) complex forms which resolves the HJ. It depends on Mg(2+) as a cofactor.

The protein resides in the cytoplasm. It catalyses the reaction Endonucleolytic cleavage at a junction such as a reciprocal single-stranded crossover between two homologous DNA duplexes (Holliday junction).. The RuvA-RuvB-RuvC complex processes Holliday junction (HJ) DNA during genetic recombination and DNA repair. Endonuclease that resolves HJ intermediates. Cleaves cruciform DNA by making single-stranded nicks across the HJ at symmetrical positions within the homologous arms, yielding a 5'-phosphate and a 3'-hydroxyl group; requires a central core of homology in the junction. The consensus cleavage sequence is 5'-(A/T)TT(C/G)-3'. Cleavage occurs on the 3'-side of the TT dinucleotide at the point of strand exchange. HJ branch migration catalyzed by RuvA-RuvB allows RuvC to scan DNA until it finds its consensus sequence, where it cleaves and resolves the cruciform DNA. This chain is Crossover junction endodeoxyribonuclease RuvC, found in Synechococcus sp. (strain ATCC 27144 / PCC 6301 / SAUG 1402/1) (Anacystis nidulans).